A 183-amino-acid polypeptide reads, in one-letter code: Casparian strip membrane protein 2 (183 aa).

At 1 to 23 the chain is on the cytoplasmic side; that stretch reads MDSGEQGETSKAPLNKGVSRGVS. The chain crosses the membrane as a helical span at residues 24-44; that stretch reads ILDLILRVIAVISTLASAIAM. The Extracellular portion of the chain corresponds to 45–71; the sequence is GTTNETLPLFTPFIQFKARYSDLPALT. Asn-48 carries an N-linked (GlcNAc...) asparagine glycan. The chain crosses the membrane as a helical span at residues 72 to 92; that stretch reads FFVVANSIVSAYLILSLPLSI. Topologically, residues 93–104 are cytoplasmic; sequence AHIIRSGAKYSR. A helical transmembrane segment spans residues 105–125; it reads LVLIIFDAAMLALVTAASSAA. Residues 126–158 are Extracellular-facing; it reads TAIVYLAHKGNVRANWLAICQQLDSFCERTSGS. Residues 159 to 179 form a helical membrane-spanning segment; that stretch reads LVGSFGAMVLLILLILLSAMA. The Cytoplasmic segment spans residues 180–183; that stretch reads LARR.

This sequence belongs to the Casparian strip membrane proteins (CASP) family. In terms of assembly, homodimer and heterodimers.

The protein localises to the cell membrane. In terms of biological role, regulates membrane-cell wall junctions and localized cell wall deposition. Required for establishment of the Casparian strip membrane domain (CSD) and the subsequent formation of Casparian strips, a cell wall modification of the root endodermis that determines an apoplastic barrier between the intraorganismal apoplasm and the extraorganismal apoplasm and prevents lateral diffusion. The polypeptide is Casparian strip membrane protein 2 (Triticum aestivum (Wheat)).